The sequence spans 235 residues: Large ribosomal subunit protein uL1 (235 aa).

The tract at residues 1–22 is disordered; sequence MSKNSKAYRAAAEKVDRSNPYT.

This sequence belongs to the universal ribosomal protein uL1 family. In terms of assembly, part of the 50S ribosomal subunit.

Binds directly to 23S rRNA. The L1 stalk is quite mobile in the ribosome, and is involved in E site tRNA release. Its function is as follows. Protein L1 is also a translational repressor protein, it controls the translation of the L11 operon by binding to its mRNA. This Mycobacterium ulcerans (strain Agy99) protein is Large ribosomal subunit protein uL1.